The following is a 326-amino-acid chain: 4-hydroxythreonine-4-phosphate dehydrogenase (326 aa).

Thr-132 lines the substrate pocket. Residues His-160, His-205, and His-260 each contribute to the a divalent metal cation site. 3 residues coordinate substrate: Lys-268, Asn-277, and Arg-286.

This sequence belongs to the PdxA family. Homodimer. The cofactor is Zn(2+). Requires Mg(2+) as cofactor. Co(2+) serves as cofactor.

The protein localises to the cytoplasm. It catalyses the reaction 4-(phosphooxy)-L-threonine + NAD(+) = 3-amino-2-oxopropyl phosphate + CO2 + NADH. It functions in the pathway cofactor biosynthesis; pyridoxine 5'-phosphate biosynthesis; pyridoxine 5'-phosphate from D-erythrose 4-phosphate: step 4/5. Catalyzes the NAD(P)-dependent oxidation of 4-(phosphooxy)-L-threonine (HTP) into 2-amino-3-oxo-4-(phosphooxy)butyric acid which spontaneously decarboxylates to form 3-amino-2-oxopropyl phosphate (AHAP). This is 4-hydroxythreonine-4-phosphate dehydrogenase from Stenotrophomonas maltophilia (strain R551-3).